The sequence spans 572 residues: Neuronal acetylcholine receptor subunit alpha-9-I (572 aa).

Positions 1–19 (MKTVVLLTWISCWIDVCTS) are cleaved as a signal peptide. At 20–232 (AQGRYAQKLL…YTLHLKRRSL (213 aa)) the chain is on the extracellular side. Asn51 carries N-linked (GlcNAc...) asparagine glycosylation. A disulfide bridge connects residues Cys149 and Cys163. N-linked (GlcNAc...) asparagine glycosylation occurs at Asn164. Cys213 and Cys214 are joined by a disulfide. 3 helical membrane-spanning segments follow: residues 233 to 253 (FYIF…PLGF), 263 to 283 (VSLG…VAES), and 297 to 317 (YIAT…IMNI). The Cytoplasmic portion of the chain corresponds to 318–550 (HFCGAEAKPV…WKKVAKVMDR (233 aa)). The tract at residues 405-458 (GHLQNHHSTHQNHLDNCRYANGGHRDDHYSNRSNQNHHSNRSQTSKGEGGEEKR) is disordered. Low complexity predominate over residues 435 to 447 (NRSNQNHHSNRSQ). Residues 551–571 (FFMWIFFIMVFLMSILIIGKA) form a helical membrane-spanning segment.

Belongs to the ligand-gated ion channel (TC 1.A.9) family. Acetylcholine receptor (TC 1.A.9.1) subfamily. In terms of tissue distribution, expressed in the liver, olfactory mucosa, pituitary gland, hair cells of the saccule and spleen.

The protein localises to the postsynaptic cell membrane. It is found in the cell membrane. The protein is Neuronal acetylcholine receptor subunit alpha-9-I (nachra9) of Oncorhynchus mykiss (Rainbow trout).